We begin with the raw amino-acid sequence, 223 residues long: Putative oxidoreductase MT1904 (223 aa).

An NADP(+)-binding site is contributed by 4 to 28 (LVTGGDTDLGRTMAEGFRNDGHKVT). Ser-128 provides a ligand contact to substrate.

Belongs to the short-chain dehydrogenases/reductases (SDR) family.

The sequence is that of Putative oxidoreductase MT1904 from Mycobacterium tuberculosis (strain CDC 1551 / Oshkosh).